The sequence spans 409 residues: SPI-1 type 3 secretion system translocon protein SctB (409 aa).

Residues 119–140 (ISGMSSSAVALLAAANTLMLTL) traverse the membrane as a helical segment.

The protein belongs to the SctB/SipC family. As to quaternary structure, the core secretion machinery of the T3SS is composed of approximately 20 different proteins, including cytoplasmic components, a base, an export apparatus and a needle. This subunit is involved in the formation of a pore, called the translocon, in host membrane.

The protein localises to the secreted. It localises to the host membrane. Its function is as follows. Component of the type III secretion system 1 (SPI-1 T3SS), also called injectisome, which is used to inject bacterial effector proteins into eukaryotic host cells. SipB/SctE1 and SipC/SctB1 are inserted into the host membrane where they form a pore and allow the translocation of effector proteins into the cytosol of target cells. The sequence is that of SPI-1 type 3 secretion system translocon protein SctB from Salmonella typhimurium (strain 14028s / SGSC 2262).